The sequence spans 488 residues: 3-octaprenyl-4-hydroxybenzoate carboxy-lyase (488 aa).

Residue N172 coordinates Mn(2+). Prenylated FMN contacts are provided by residues 175-177, 189-191, and 194-195; these read IYR, RWL, and RG. E238 lines the Mn(2+) pocket. The Proton donor role is filled by D287.

The protein belongs to the UbiD family. In terms of assembly, homohexamer. It depends on prenylated FMN as a cofactor. Requires Mn(2+) as cofactor.

It localises to the cell membrane. The enzyme catalyses a 4-hydroxy-3-(all-trans-polyprenyl)benzoate + H(+) = a 2-(all-trans-polyprenyl)phenol + CO2. It functions in the pathway cofactor biosynthesis; ubiquinone biosynthesis. Functionally, catalyzes the decarboxylation of 3-octaprenyl-4-hydroxy benzoate to 2-octaprenylphenol, an intermediate step in ubiquinone biosynthesis. This Legionella pneumophila subsp. pneumophila (strain Philadelphia 1 / ATCC 33152 / DSM 7513) protein is 3-octaprenyl-4-hydroxybenzoate carboxy-lyase.